Reading from the N-terminus, the 264-residue chain is MKQYHDLMQHILDQGVKKEDRTGTGTVSVFGYQMRFNLQEGFPLLTTKKLHMRSITHELLWFLQGDTNIKYLKDNNVSIWDEWADENGNLGPVYGYQWRSWPTPDGKHIDQITNVVNMIKNNPDSRRLIVSAWNVGEIEKMKLPPCHAFFQFYVADGKLSCQLYQRSADVFLGVPFNIASYALLTMMVAQVCGLQAGDFVHTLGDAHLYSNHLEQAKLQLSRDFRPLPAMKINPDVKSIFDFKFEDFTLEGYDPHPHIKAAVAV.

DUMP is bound at residue arginine 21. Histidine 51 is a binding site for (6R)-5,10-methylene-5,6,7,8-tetrahydrofolate. 126-127 lines the dUMP pocket; the sequence is RR. The active-site Nucleophile is the cysteine 146. Residues 166-169, asparagine 177, and 207-209 each bind dUMP; these read RSAD and HLY. (6R)-5,10-methylene-5,6,7,8-tetrahydrofolate is bound at residue aspartate 169. Position 263 (alanine 263) interacts with (6R)-5,10-methylene-5,6,7,8-tetrahydrofolate.

Belongs to the thymidylate synthase family. Bacterial-type ThyA subfamily. Homodimer.

It localises to the cytoplasm. It carries out the reaction dUMP + (6R)-5,10-methylene-5,6,7,8-tetrahydrofolate = 7,8-dihydrofolate + dTMP. It functions in the pathway pyrimidine metabolism; dTTP biosynthesis. In terms of biological role, catalyzes the reductive methylation of 2'-deoxyuridine-5'-monophosphate (dUMP) to 2'-deoxythymidine-5'-monophosphate (dTMP) while utilizing 5,10-methylenetetrahydrofolate (mTHF) as the methyl donor and reductant in the reaction, yielding dihydrofolate (DHF) as a by-product. This enzymatic reaction provides an intracellular de novo source of dTMP, an essential precursor for DNA biosynthesis. This chain is Thymidylate synthase, found in Cytophaga hutchinsonii (strain ATCC 33406 / DSM 1761 / CIP 103989 / NBRC 15051 / NCIMB 9469 / D465).